A 95-amino-acid chain; its full sequence is Small integral membrane protein 18 (95 aa).

The chain crosses the membrane as a helical span at residues 35–55; it reads CFVILLLFIFTVVSLVVLAFL.

It localises to the membrane. The protein is Small integral membrane protein 18 (SMIM18) of Homo sapiens (Human).